Here is a 280-residue protein sequence, read N- to C-terminus: Energy-coupling factor transporter ATP-binding protein EcfA2 (280 aa).

An ABC transporter domain is found at 3–245 (INLQNVSYTY…VSLLEKKQLG (243 aa)). 40 to 47 (GHTGSGKS) provides a ligand contact to ATP.

The protein belongs to the ABC transporter superfamily. Energy-coupling factor EcfA family. In terms of assembly, forms a stable energy-coupling factor (ECF) transporter complex composed of 2 membrane-embedded substrate-binding proteins (S component), 2 ATP-binding proteins (A component) and 2 transmembrane proteins (T component).

The protein localises to the cell membrane. Its function is as follows. ATP-binding (A) component of a common energy-coupling factor (ECF) ABC-transporter complex. Unlike classic ABC transporters this ECF transporter provides the energy necessary to transport a number of different substrates. This chain is Energy-coupling factor transporter ATP-binding protein EcfA2, found in Streptococcus pyogenes serotype M3 (strain ATCC BAA-595 / MGAS315).